The sequence spans 164 residues: B-phycoerythrin alpha chain (164 aa).

Positions 82 and 139 each coordinate (2R,3E)-phycoerythrobilin.

The protein belongs to the phycobiliprotein family. Heteromer of 6 alpha, 6 beta and one gamma chain. Contains two covalently linked bilin chromophores.

Its subcellular location is the plastid. The protein localises to the chloroplast thylakoid membrane. Light-harvesting photosynthetic bile pigment-protein from the phycobiliprotein complex. The protein is B-phycoerythrin alpha chain (cpeA) of Porphyridium sordidum (Red alga).